Consider the following 206-residue polypeptide: CASP-like protein 4B2 (206 aa).

2 stretches are compositionally biased toward low complexity: residues 1 to 12 (MAMVPADADAAA) and 24 to 36 (SSQN…AAAA). The tract at residues 1–42 (MAMVPADADAAAKPPPDVEKPDYSSQNGAPNSAAAAAGGGGG) is disordered. Over 1-60 (MAMVPADADAAAKPPPDVEKPDYSSQNGAPNSAAAAAGGGGGGVVDSVVARWRREDMLDK) the chain is Cytoplasmic. Residues 61–81 (SPLALHAAAAAFAFVALVLVA) traverse the membrane as a helical segment. Over 82–99 (SNQHGDWMEFDRYQEYRY) the chain is Extracellular. A helical membrane pass occupies residues 100-120 (LLAIAALAFAYSLAQALRHAL). Over 121-138 (RMRRGVDPVPTASGRLLD) the chain is Cytoplasmic. The chain crosses the membrane as a helical span at residues 139–159 (FASDQVVAYLLMSALSAATPI). Residues 160–174 (TNRMRSAVINRFTDT) lie on the Extracellular side of the membrane. A helical membrane pass occupies residues 175–195 (TAAAISMAFLAFVSLALSAIV). Topologically, residues 196-206 (SGYKLSKQTYM) are cytoplasmic.

This sequence belongs to the Casparian strip membrane proteins (CASP) family. As to quaternary structure, homodimer and heterodimers.

The protein resides in the cell membrane. This is CASP-like protein 4B2 from Oryza sativa subsp. japonica (Rice).